Here is a 379-residue protein sequence, read N- to C-terminus: Cytochrome b (379 aa).

A run of 4 helical transmembrane segments spans residues Phe33 to Met53, Trp77 to Val98, Trp113 to Leu133, and Phe178 to Leu198. 2 residues coordinate heme b: His83 and His97. Heme b-binding residues include His182 and His196. Residue His201 participates in a ubiquinone binding. 4 helical membrane passes run Ile226–Ser246, Leu288–His308, Leu320–Gly340, and Tyr347–Xaa367.

This sequence belongs to the cytochrome b family. As to quaternary structure, the cytochrome bc1 complex contains 11 subunits: 3 respiratory subunits (MT-CYB, CYC1 and UQCRFS1), 2 core proteins (UQCRC1 and UQCRC2) and 6 low-molecular weight proteins (UQCRH/QCR6, UQCRB/QCR7, UQCRQ/QCR8, UQCR10/QCR9, UQCR11/QCR10 and a cleavage product of UQCRFS1). This cytochrome bc1 complex then forms a dimer. Requires heme b as cofactor.

It localises to the mitochondrion inner membrane. Functionally, component of the ubiquinol-cytochrome c reductase complex (complex III or cytochrome b-c1 complex) that is part of the mitochondrial respiratory chain. The b-c1 complex mediates electron transfer from ubiquinol to cytochrome c. Contributes to the generation of a proton gradient across the mitochondrial membrane that is then used for ATP synthesis. The sequence is that of Cytochrome b (MT-CYB) from Myotis goudotii (Malagasy mouse-eared bat).